Reading from the N-terminus, the 397-residue chain is Phosphoglycerate kinase (397 aa).

Substrate contacts are provided by residues 21–23 (DVN), arginine 36, 59–62 (HFGR), arginine 119, and arginine 152. ATP is bound by residues lysine 202, glutamate 324, and 354-357 (GGDT).

It belongs to the phosphoglycerate kinase family. As to quaternary structure, monomer.

It localises to the cytoplasm. The catalysed reaction is (2R)-3-phosphoglycerate + ATP = (2R)-3-phospho-glyceroyl phosphate + ADP. It functions in the pathway carbohydrate degradation; glycolysis; pyruvate from D-glyceraldehyde 3-phosphate: step 2/5. This Cereibacter sphaeroides (strain ATCC 17029 / ATH 2.4.9) (Rhodobacter sphaeroides) protein is Phosphoglycerate kinase.